The sequence spans 98 residues: Integration host factor subunit alpha (98 aa).

The tract at residues 49–71 is disordered; the sequence is FGNFDLRDKNQRPGRNPKTGEDI.

This sequence belongs to the bacterial histone-like protein family. In terms of assembly, heterodimer of an alpha and a beta chain.

Its function is as follows. This protein is one of the two subunits of integration host factor, a specific DNA-binding protein that functions in genetic recombination as well as in transcriptional and translational control. The sequence is that of Integration host factor subunit alpha from Pectobacterium atrosepticum (strain SCRI 1043 / ATCC BAA-672) (Erwinia carotovora subsp. atroseptica).